A 794-amino-acid polypeptide reads, in one-letter code: Signal transducer and activator of transcription 5A (794 aa).

Tyr-90 carries the post-translational modification Phosphotyrosine. Phosphoserine occurs at positions 128 and 193. In terms of domain architecture, SH2 spans 589–686; that stretch reads WNDGAILGFV…EVFSKYYTPV (98 aa). The residue at position 682 (Tyr-682) is a Phosphotyrosine. Tyr-694 is modified (phosphotyrosine; by JAK2). Residues 773–794 are disordered; the sequence is DSLDSRLSPPAGLFTSARGSLS. A Phosphoserine modification is found at Ser-780.

It belongs to the transcription factor STAT family. In terms of assembly, forms a homodimer or a heterodimer with a related family member. Binds NR3C1. Interacts with NCOA1 and SOCS7. Interacts with ERBB4. Interacts with EBF4. Interacts with CD69. Tyrosine phosphorylated in response to KITLG/SCF, IL2, IL3, IL7, IL15, CSF2/GMCSF, GH1, PRL, EPO and THPO. Activated KIT promotes phosphorylation on tyrosine residues and subsequent translocation to the nucleus. Tyrosine phosphorylated in response to constitutively activated FGFR1, FGFR2, FGFR3 and FGFR4. Tyrosine phosphorylation is required for DNA-binding activity and dimerization. Serine phosphorylation is also required for maximal transcriptional activity. Tyrosine phosphorylated in response to signaling via activated FLT3; wild-type FLT3 results in much weaker phosphorylation than constitutively activated mutant FLT3. Alternatively, can be phosphorylated by JAK2 at Tyr-694. In terms of processing, ISGylated.

The protein resides in the cytoplasm. It localises to the nucleus. In terms of biological role, carries out a dual function: signal transduction and activation of transcription. Mediates cellular responses to the cytokine KITLG/SCF and other growth factors. Mediates cellular responses to ERBB4. May mediate cellular responses to activated FGFR1, FGFR2, FGFR3 and FGFR4. Binds to the GAS element and activates PRL-induced transcription. Regulates the expression of milk proteins during lactation. The sequence is that of Signal transducer and activator of transcription 5A (STAT5A) from Homo sapiens (Human).